The sequence spans 114 residues: Transmembrane protein 14C (114 aa).

4 helical membrane passes run 8-28 (LMPL…GGII), 33-53 (AGSV…GLGA), 63-83 (VWVF…RFYN), and 89-109 (PAGL…ISLL).

This sequence belongs to the TMEM14 family.

Its subcellular location is the mitochondrion membrane. Required for normal heme biosynthesis. The chain is Transmembrane protein 14C (Tmem14c) from Mus musculus (Mouse).